A 343-amino-acid chain; its full sequence is Methionine synthase (343 aa).

Positions 211, 213, 236, and 315 each coordinate Zn(2+).

Belongs to the archaeal MetE family. The cofactor is Zn(2+).

Its pathway is amino-acid biosynthesis; L-methionine biosynthesis via de novo pathway. In terms of biological role, catalyzes the transfer of a methyl group to L-homocysteine resulting in methionine formation. The physiological methyl donor is unknown. This chain is Methionine synthase, found in Thermoplasma acidophilum (strain ATCC 25905 / DSM 1728 / JCM 9062 / NBRC 15155 / AMRC-C165).